Reading from the N-terminus, the 417-residue chain is UDP-N-acetylglucosamine 1-carboxyvinyltransferase (417 aa).

A phosphoenolpyruvate-binding site is contributed by 22–23 (KN). R92 is a binding site for UDP-N-acetyl-alpha-D-glucosamine. C116 acts as the Proton donor in catalysis. C116 bears the 2-(S-cysteinyl)pyruvic acid O-phosphothioketal mark. UDP-N-acetyl-alpha-D-glucosamine-binding residues include D304 and I326.

Belongs to the EPSP synthase family. MurA subfamily.

The protein resides in the cytoplasm. The enzyme catalyses phosphoenolpyruvate + UDP-N-acetyl-alpha-D-glucosamine = UDP-N-acetyl-3-O-(1-carboxyvinyl)-alpha-D-glucosamine + phosphate. It functions in the pathway cell wall biogenesis; peptidoglycan biosynthesis. In terms of biological role, cell wall formation. Adds enolpyruvyl to UDP-N-acetylglucosamine. In Geotalea daltonii (strain DSM 22248 / JCM 15807 / FRC-32) (Geobacter daltonii), this protein is UDP-N-acetylglucosamine 1-carboxyvinyltransferase.